The primary structure comprises 162 residues: uncharacterized protein (162 aa).

Positions 1–49 are disordered; that stretch reads MNSRTASARGWFSSRPPTSESDLEPATDGPASETTTLSPEATTFNDTRI. The segment covering 32–46 has biased composition (polar residues); that stretch reads SETTTLSPEATTFND. Residues 62 to 82 traverse the membrane as a helical segment; that stretch reads MLLSFGIITVIGLAVALVLYI.

The protein resides in the membrane. This is an uncharacterized protein from Homo sapiens (Human).